A 99-amino-acid chain; its full sequence is Large ribosomal subunit protein uL23 (99 aa).

The protein belongs to the universal ribosomal protein uL23 family. In terms of assembly, part of the 50S ribosomal subunit. Contacts protein L29, and trigger factor when it is bound to the ribosome.

Its function is as follows. One of the early assembly proteins it binds 23S rRNA. One of the proteins that surrounds the polypeptide exit tunnel on the outside of the ribosome. Forms the main docking site for trigger factor binding to the ribosome. This is Large ribosomal subunit protein uL23 from Lachnoclostridium phytofermentans (strain ATCC 700394 / DSM 18823 / ISDg) (Clostridium phytofermentans).